A 338-amino-acid chain; its full sequence is Ketol-acid reductoisomerase (NADP(+)) (338 aa).

Residues 1-181 (MQVYYDKDAD…GGGRAGVIET (181 aa)) form the KARI N-terminal Rossmann domain. NADP(+) contacts are provided by residues 24-27 (YGSQ), Arg47, Ser50, Ser52, and 82-85 (DEHQ). The active site involves His107. Gly133 provides a ligand contact to NADP(+). One can recognise a KARI C-terminal knotted domain in the interval 182–327 (SFREETETDL…ERLRGMMPWI (146 aa)). The Mg(2+) site is built by Asp190, Glu194, Glu226, and Glu230. Ser251 serves as a coordination point for substrate.

Belongs to the ketol-acid reductoisomerase family. Mg(2+) is required as a cofactor.

It carries out the reaction (2R)-2,3-dihydroxy-3-methylbutanoate + NADP(+) = (2S)-2-acetolactate + NADPH + H(+). It catalyses the reaction (2R,3R)-2,3-dihydroxy-3-methylpentanoate + NADP(+) = (S)-2-ethyl-2-hydroxy-3-oxobutanoate + NADPH + H(+). Its pathway is amino-acid biosynthesis; L-isoleucine biosynthesis; L-isoleucine from 2-oxobutanoate: step 2/4. It participates in amino-acid biosynthesis; L-valine biosynthesis; L-valine from pyruvate: step 2/4. Its function is as follows. Involved in the biosynthesis of branched-chain amino acids (BCAA). Catalyzes an alkyl-migration followed by a ketol-acid reduction of (S)-2-acetolactate (S2AL) to yield (R)-2,3-dihydroxy-isovalerate. In the isomerase reaction, S2AL is rearranged via a Mg-dependent methyl migration to produce 3-hydroxy-3-methyl-2-ketobutyrate (HMKB). In the reductase reaction, this 2-ketoacid undergoes a metal-dependent reduction by NADPH to yield (R)-2,3-dihydroxy-isovalerate. The protein is Ketol-acid reductoisomerase (NADP(+)) of Alkalilimnicola ehrlichii (strain ATCC BAA-1101 / DSM 17681 / MLHE-1).